The primary structure comprises 299 residues: Glutamyl-Q tRNA(Asp) synthetase (299 aa).

L-glutamate contacts are provided by residues 9–13 and Glu-45; that span reads RFAPS. A 'HIGH' region motif is present at residues 12–22; the sequence is PSPTGPLHFGS. Residues Cys-101, Cys-103, and Cys-118 each coordinate Zn(2+). Positions 170 and 188 each coordinate L-glutamate. The 'KMSKS' region signature appears at 226–230; sequence KLSKS. ATP is bound at residue Lys-229.

It belongs to the class-I aminoacyl-tRNA synthetase family. GluQ subfamily. It depends on Zn(2+) as a cofactor.

Catalyzes the tRNA-independent activation of glutamate in presence of ATP and the subsequent transfer of glutamate onto a tRNA(Asp). Glutamate is transferred on the 2-amino-5-(4,5-dihydroxy-2-cyclopenten-1-yl) moiety of the queuosine in the wobble position of the QUC anticodon. This Xanthomonas axonopodis pv. citri (strain 306) protein is Glutamyl-Q tRNA(Asp) synthetase.